A 265-amino-acid chain; its full sequence is Aquaporin-5 (265 aa).

Over 1–12 (MKKEVCSLAFLK) the chain is Cytoplasmic. A helical transmembrane segment spans residues 13–33 (AVFAEFLATLIFVFFGLASAL). Over 34–39 (KWPSAL) the chain is Extracellular. A helical transmembrane segment spans residues 40 to 60 (PTILQIALAFGLAIGTLAQAL). At 61–65 (GPVSG) the chain is on the cytoplasmic side. An intramembrane region (discontinuously helical) is located at residues 66 to 74 (GHINPAITL). Positions 69-71 (NPA) match the NPA 1 motif. The Cytoplasmic segment spans residues 75–87 (ALLVGNQISLLRA). The chain crosses the membrane as a helical span at residues 88–108 (VFYVVAQLVGAIAGAGILYGL). The Extracellular segment spans residues 109 to 126 (APGNARGNLAVNSLNNNT). Asparagine 124 carries an N-linked (GlcNAc...) asparagine glycan. The chain crosses the membrane as a helical span at residues 127–147 (TPGQAVVVEMILTFQLALCIF). Residues 148–158 (SSTDSRRTSPV) lie on the Cytoplasmic side of the membrane. A helical transmembrane segment spans residues 159 to 179 (GSPALSIGLSVTLGHLVGIYF). Threonine 180 is a topological domain (extracellular). An intramembrane region (discontinuously helical) is located at residues 181–191 (GCSMNPARSFG). Residues 185 to 187 (NPA) carry the NPA 2 motif. Residues 192 to 203 (PAVVMNRFSPSH) are Extracellular-facing. A helical transmembrane segment spans residues 204-224 (WVFWVGPIVGAAVAAILYFYL). Residues 225-265 (LFPNSLSLSERVAVVKGTYESEEDWEEQREERKKTMELTAH) are Cytoplasmic-facing.

This sequence belongs to the MIP/aquaporin (TC 1.A.8) family. In terms of assembly, homotetramer; each monomer provides an independent water pore. Interacts with TRPV4; the interaction is probably indirect and regulates TRPV4 activation by hypotonicity.

The protein localises to the apical cell membrane. The protein resides in the cell membrane. It localises to the cytoplasmic vesicle membrane. It carries out the reaction H2O(in) = H2O(out). Functionally, aquaporins form homotetrameric transmembrane channels, with each monomer independently mediating water transport across the plasma membrane along its osmotic gradient. Plays an important role in fluid secretion in salivary glands. Required for TRPV4 activation by hypotonicity. Together with TRPV4, controls regulatory volume decrease in salivary epithelial cells. Seems to play a redundant role in water transport in the eye, lung and in sweat glands. This Sus scrofa (Pig) protein is Aquaporin-5.